The chain runs to 215 residues: Peroxiredoxin (215 aa).

The Thioredoxin domain occupies 6–161; it reads PLIGEEFPRL…ILRAVRALQT (156 aa). The Cysteine sulfenic acid (-SOH) intermediate role is filled by Cys48. A substrate-binding site is contributed by Arg124. A disulfide bridge connects residues Cys205 and Cys211.

This sequence belongs to the peroxiredoxin family. Prx6 subfamily. In terms of assembly, homodecamer. Pentamer of dimers that assemble into a ring structure.

It is found in the cytoplasm. The enzyme catalyses a hydroperoxide + [thioredoxin]-dithiol = an alcohol + [thioredoxin]-disulfide + H2O. Thiol-specific peroxidase that catalyzes the reduction of hydrogen peroxide and organic hydroperoxides to water and alcohols, respectively. Plays a role in cell protection against oxidative stress by detoxifying peroxides. The chain is Peroxiredoxin from Thermotoga petrophila (strain ATCC BAA-488 / DSM 13995 / JCM 10881 / RKU-1).